Here is a 455-residue protein sequence, read N- to C-terminus: Phosphoglucosamine mutase (455 aa).

Ser106 functions as the Phosphoserine intermediate in the catalytic mechanism. Mg(2+) contacts are provided by Ser106, Asp245, Asp247, and Asp249. Position 106 is a phosphoserine (Ser106).

Belongs to the phosphohexose mutase family. Requires Mg(2+) as cofactor. In terms of processing, activated by phosphorylation.

It catalyses the reaction alpha-D-glucosamine 1-phosphate = D-glucosamine 6-phosphate. Functionally, catalyzes the conversion of glucosamine-6-phosphate to glucosamine-1-phosphate. The protein is Phosphoglucosamine mutase of Acaryochloris marina (strain MBIC 11017).